The chain runs to 335 residues: Glyceraldehyde-3-phosphate dehydrogenase, cytosolic (335 aa).

NAD(+) is bound by residues arginine 13–isoleucine 14, aspartate 35, and arginine 80. D-glyceraldehyde 3-phosphate is bound by residues serine 151 to threonine 153, threonine 182, threonine 211 to glycine 212, and arginine 234. Residue cysteine 152 is the Nucleophile of the active site. Asparagine 316 serves as a coordination point for NAD(+).

It belongs to the glyceraldehyde-3-phosphate dehydrogenase family. Homotetramer.

The protein resides in the cytoplasm. It catalyses the reaction D-glyceraldehyde 3-phosphate + phosphate + NAD(+) = (2R)-3-phospho-glyceroyl phosphate + NADH + H(+). Its pathway is carbohydrate degradation; glycolysis; pyruvate from D-glyceraldehyde 3-phosphate: step 1/5. This is Glyceraldehyde-3-phosphate dehydrogenase, cytosolic (GAPC) from Gracilaria gracilis (Red alga).